Here is a 95-residue protein sequence, read N- to C-terminus: Large ribosomal subunit protein bL27 (95 aa).

A propeptide spanning residues Met-1–Phe-6 is cleaved from the precursor. The interval Met-1–Arg-25 is disordered.

The protein belongs to the bacterial ribosomal protein bL27 family. The N-terminus is cleaved by ribosomal processing cysteine protease Prp.

The polypeptide is Large ribosomal subunit protein bL27 (Thermoanaerobacter pseudethanolicus (strain ATCC 33223 / 39E) (Clostridium thermohydrosulfuricum)).